The following is a 287-amino-acid chain: Phycobilisome 32.1 kDa linker polypeptide, phycocyanin-associated, rod (287 aa).

The region spanning 2–180 is the PBS-linker domain; it reads AITAAASRLG…LYRGYANSDR (179 aa). The region spanning 235 to 287 is the CpcD-like domain; it reads GRVYRIEVAGIRQPGYPGVRRSSTAFLVPYEQLSAKMQQLQRTGARIISVNPA.

Belongs to the phycobilisome linker protein family.

The protein resides in the cellular thylakoid membrane. Its function is as follows. Rod linker protein, associated with phycocyanin. Linker polypeptides determine the state of aggregation and the location of the disk-shaped phycobiliprotein units within the phycobilisome and modulate their spectroscopic properties in order to mediate a directed and optimal energy transfer. This is Phycobilisome 32.1 kDa linker polypeptide, phycocyanin-associated, rod (cpcC) from Thermosynechococcus vestitus (strain NIES-2133 / IAM M-273 / BP-1).